We begin with the raw amino-acid sequence, 78 residues long: MLPIIEFCISNLASGSYKAMEMLEKDPNLDIIEYSCLSYCTRCAETLFALVNGEFVSGETPEQLVENIYRHLEENPMF.

Belongs to the UPF0349 family.

This is UPF0349 protein GK2958 from Geobacillus kaustophilus (strain HTA426).